Reading from the N-terminus, the 631-residue chain is Nucleoside triphosphatase I (631 aa).

Residues F42–K204 form the Helicase ATP-binding domain. H55–T62 contacts ATP. A DEXH box motif is present at residues D141–H144. A Helicase C-terminal domain is found at K367 to I536. The tract at residues D457–F524 is binding to the cap-specific mRNA (nucleoside-2'-O-)-methyltransferase.

This sequence belongs to the helicase family. NPH I subfamily. In terms of assembly, monomer. Interacts (via C-terminus) with RAP94 (via N-terminus). Interacts with the cap-specific mRNA (nucleoside-2'-O-)-methyltransferase.

The protein localises to the virion. The catalysed reaction is a ribonucleoside 5'-triphosphate + H2O = a ribonucleoside 5'-diphosphate + phosphate + H(+). In terms of biological role, DNA-dependent ATPase required for providing the needed energy to achieve the termination of early transcripts. Acts in concert with the RAP94 subunit of the virion RNA polymerase and the capping enzyme/VTF to catalyze release of UUUUUNU-containing nascent RNA from the elongation complex. NPH-I must bind ssDNA in order to exhibit ATPase activity. This chain is Nucleoside triphosphatase I (NPH1), found in Erythrocebus patas (Red guenon).